The chain runs to 482 residues: UDP-N-acetylmuramate--L-alanine ligase (482 aa).

An ATP-binding site is contributed by 123 to 129 (GTHGKTT).

This sequence belongs to the MurCDEF family.

It is found in the cytoplasm. It catalyses the reaction UDP-N-acetyl-alpha-D-muramate + L-alanine + ATP = UDP-N-acetyl-alpha-D-muramoyl-L-alanine + ADP + phosphate + H(+). The protein operates within cell wall biogenesis; peptidoglycan biosynthesis. Cell wall formation. The protein is UDP-N-acetylmuramate--L-alanine ligase of Pseudomonas entomophila (strain L48).